We begin with the raw amino-acid sequence, 324 residues long: HTH-type transcriptional regulator CysB (324 aa).

Residues 1-59 enclose the HTH lysR-type domain; that stretch reads MKLQQLRYIVEVVNHNLNVSSTAEGLYTSQPGISKQVRMLEDELGIQIFSRSGKHLTQV. The H-T-H motif DNA-binding region spans 19–38; the sequence is VSSTAEGLYTSQPGISKQVR.

Belongs to the LysR transcriptional regulatory family. As to quaternary structure, homotetramer.

Its subcellular location is the cytoplasm. This protein is a positive regulator of gene expression for the cysteine regulon. The inducer for CysB is N-acetylserine. In Escherichia coli O157:H7, this protein is HTH-type transcriptional regulator CysB (cysB).